The chain runs to 227 residues: MKFAVIVLPGSNCDIDMYHAIQDELGEQVEYVWHDETSLDGFDGVLVPGGFSYGDYLRCGAIARFSNIMPAVKKAAAEGKPVLGVCNGFQILQELGILPGAMRRNKDLKFICRPVELIVENNETQFTSGYQKGESISVPVAHGEGNFYCDEDTLAKLIENNQIAFTYGDDINGSVNRIAGITNEEGNVLGMMPHPERAVDSLLGSADGLKLFQSIVKNWRDTHVTTA.

The Glutamine amidotransferase type-1 domain occupies 3–225 (FAVIVLPGSN…VKNWRDTHVT (223 aa)). Catalysis depends on cysteine 86, which acts as the Nucleophile. Residues histidine 194 and glutamate 196 contribute to the active site.

Part of the FGAM synthase complex composed of 1 PurL, 1 PurQ and 2 PurS subunits.

It localises to the cytoplasm. The catalysed reaction is N(2)-formyl-N(1)-(5-phospho-beta-D-ribosyl)glycinamide + L-glutamine + ATP + H2O = 2-formamido-N(1)-(5-O-phospho-beta-D-ribosyl)acetamidine + L-glutamate + ADP + phosphate + H(+). It carries out the reaction L-glutamine + H2O = L-glutamate + NH4(+). It functions in the pathway purine metabolism; IMP biosynthesis via de novo pathway; 5-amino-1-(5-phospho-D-ribosyl)imidazole from N(2)-formyl-N(1)-(5-phospho-D-ribosyl)glycinamide: step 1/2. In terms of biological role, part of the phosphoribosylformylglycinamidine synthase complex involved in the purines biosynthetic pathway. Catalyzes the ATP-dependent conversion of formylglycinamide ribonucleotide (FGAR) and glutamine to yield formylglycinamidine ribonucleotide (FGAM) and glutamate. The FGAM synthase complex is composed of three subunits. PurQ produces an ammonia molecule by converting glutamine to glutamate. PurL transfers the ammonia molecule to FGAR to form FGAM in an ATP-dependent manner. PurS interacts with PurQ and PurL and is thought to assist in the transfer of the ammonia molecule from PurQ to PurL. This is Phosphoribosylformylglycinamidine synthase subunit PurQ from Bacillus pumilus (strain SAFR-032).